A 146-amino-acid polypeptide reads, in one-letter code: Large ribosomal subunit protein uL15 (146 aa).

A compositionally biased stretch (basic and acidic residues) spans 1-13 (MKLHELKPAEGSR). The disordered stretch occupies residues 1 to 60 (MKLHELKPAEGSRKQRNRVGRGIGSGNGKTAGKGHKGQNARSGGGVRPGFEGGQNPLFRR). 2 stretches are compositionally biased toward gly residues: residues 21 to 31 (RGIGSGNGKTA) and 42 to 52 (SGGGVRPGFEG).

This sequence belongs to the universal ribosomal protein uL15 family. As to quaternary structure, part of the 50S ribosomal subunit.

In terms of biological role, binds to the 23S rRNA. The polypeptide is Large ribosomal subunit protein uL15 (Lysinibacillus sphaericus (strain C3-41)).